Reading from the N-terminus, the 351-residue chain is Transmembrane protein DDB_G0272716 (351 aa).

N-linked (GlcNAc...) asparagine glycans are attached at residues asparagine 4 and asparagine 59. A run of 2 helical transmembrane segments spans residues 175–195 (FSSL…TAIG) and 215–235 (VVAP…GAFI). Asparagine 345 is a glycosylation site (N-linked (GlcNAc...) asparagine).

It is found in the membrane. This is Transmembrane protein DDB_G0272716 from Dictyostelium discoideum (Social amoeba).